Reading from the N-terminus, the 352-residue chain is Ion-translocating oxidoreductase complex subunit D (352 aa).

4 helical membrane-spanning segments follow: residues 20–40 (IMLLVLLAAVPGIAAQLWFFG), 42–62 (GTLVQILLASVSALLAEALVL), 89–109 (IPPLAPWWMVVLGTVFAVIIA), and 123–143 (PAMIGYVVLLISFPVQMTSWL). FMN phosphoryl threonine is present on threonine 187. 5 helical membrane-spanning segments follow: residues 214–234 (ILAGAGWQWVNLAWLAGGVWL), 242–262 (WHVPLSFLVTLALCATLGWLF), 267–287 (LAAPQIHLLSGATMLGAFFIL), 301–321 (LIFGALAGLLVWMIRSFGGYP), and 322–342 (DGVAFAVLLANITVPLIDYYT).

The protein belongs to the NqrB/RnfD family. In terms of assembly, the complex is composed of six subunits: RsxA, RsxB, RsxC, RsxD, RsxE and RsxG. The cofactor is FMN.

Its subcellular location is the cell inner membrane. In terms of biological role, part of a membrane-bound complex that couples electron transfer with translocation of ions across the membrane. Required to maintain the reduced state of SoxR. The sequence is that of Ion-translocating oxidoreductase complex subunit D from Escherichia coli (strain UTI89 / UPEC).